The chain runs to 417 residues: Serine/threonine-protein phosphatase 4 regulatory subunit 2 (417 aa).

3 stretches are compositionally biased toward polar residues: residues E140–R149, N158–G170, and A186–S196. Positions E140 to D417 are disordered. Phosphoserine is present on S159. The segment covering T197–S213 has biased composition (basic and acidic residues). Residues D214 to S226 show a composition bias toward low complexity. The residue at position 226 (S226) is a Phosphoserine. Over residues K231–E258 the composition is skewed to basic and acidic residues. The span at T259–S269 shows a compositional bias: polar residues. The span at Q283 to T297 shows a compositional bias: basic and acidic residues. Residues E298 to S311 show a composition bias toward acidic residues. The span at M318 to K327 shows a compositional bias: basic and acidic residues. The span at E338–D350 shows a compositional bias: acidic residues. Basic and acidic residues predominate over residues Q353–G363. The span at G385–S399 shows a compositional bias: polar residues. Residues M400 to D417 show a composition bias toward acidic residues.

It belongs to the PPP4R2 family. As to quaternary structure, serine/threonine-protein phosphatase 4 (PP4) occurs in different assemblies of the catalytic and one or more regulatory subunits. Component of the PP4 complexes PPP4C-PPP4R2, PPP4C-PPP4R2-PPP4R3A and PPP4C-PPP4R2-PPP4R3B. The PPP4C-PPP4R2 complex appears to be a tetramer composed of 2 molecules of PPP4C and 2 molecules of PPP4R2. Interacts with DDX20/GEMIN3 and GEMIN4. Interacts with RPA2; this DNA damage-dependent interaction recruits PPP4C leading to RPA2 dephosphorylation.

The protein localises to the cytoplasm. The protein resides in the cytoskeleton. It localises to the microtubule organizing center. Its subcellular location is the centrosome. It is found in the nucleus. Regulatory subunit of serine/threonine-protein phosphatase 4 (PP4). May regulate the activity of PPP4C at centrosomal microtubule organizing centers. Its interaction with the SMN complex leads to enhance the temporal localization of snRNPs, suggesting a role of PPP4C in maturation of spliceosomal snRNPs. The PPP4C-PPP4R2-PPP4R3A PP4 complex specifically dephosphorylates H2AX phosphorylated on 'Ser-140' (gamma-H2AX) generated during DNA replication and required for DNA double strand break repair. Mediates RPA2 dephosphorylation by recruiting PPP4C to RPA2 in a DNA damage-dependent manner. RPA2 dephosphorylation is required for the efficient RPA2-mediated recruitment of RAD51 to chromatin following double strand breaks, an essential step for DNA repair. The polypeptide is Serine/threonine-protein phosphatase 4 regulatory subunit 2 (PPP4R2) (Pongo abelii (Sumatran orangutan)).